A 109-amino-acid polypeptide reads, in one-letter code: Glutaredoxin-C13 (109 aa).

The 107-residue stretch at 2-108 (AEMVARLASE…PMLKNAGALW (107 aa)) folds into the Glutaredoxin domain. Cysteines 22 and 25 form a disulfide. Residues 106 to 109 (ALWL) carry the Responsive for interaction with TGA factors motif.

It belongs to the glutaredoxin family. CC-type subfamily.

The protein localises to the cytoplasm. Its subcellular location is the nucleus. Functionally, has a glutathione-disulfide oxidoreductase activity in the presence of NADPH and glutathione reductase. Reduces low molecular weight disulfides and proteins. This is Glutaredoxin-C13 (GRXC13) from Oryza sativa subsp. japonica (Rice).